Consider the following 375-residue polypeptide: 23S rRNA (uracil(747)-C(5))-methyltransferase RlmC (375 aa).

Residues Cys3, Cys11, Cys14, and Cys87 each contribute to the [4Fe-4S] cluster site. Residues Gln212, Phe241, Glu262, and Asn307 each coordinate S-adenosyl-L-methionine. Residue Cys334 is the Nucleophile of the active site.

It belongs to the class I-like SAM-binding methyltransferase superfamily. RNA M5U methyltransferase family. RlmC subfamily.

It catalyses the reaction uridine(747) in 23S rRNA + S-adenosyl-L-methionine = 5-methyluridine(747) in 23S rRNA + S-adenosyl-L-homocysteine + H(+). Catalyzes the formation of 5-methyl-uridine at position 747 (m5U747) in 23S rRNA. This Salmonella enteritidis PT4 (strain P125109) protein is 23S rRNA (uracil(747)-C(5))-methyltransferase RlmC.